The following is a 503-amino-acid chain: uncharacterized protein (503 aa).

The next 12 helical transmembrane spans lie at 20–40 (FIAF…VLTM), 43–63 (LGPF…GVML), 106–126 (VSLT…LSFA), 138–158 (LIGL…ISLF), 166–186 (AILF…ILGI), 215–235 (VIST…LTAI), 249–269 (LLMF…ISGI), 301–321 (YLGI…SLAS), 359–379 (VWAS…VPFL), 405–425 (LAVL…FMIL), 443–463 (GVSF…ITAW), and 468–488 (TFKL…FIHS).

To M.genitalium MG225.

It localises to the cell membrane. This is an uncharacterized protein from Mycoplasma pneumoniae (strain ATCC 29342 / M129 / Subtype 1) (Mycoplasmoides pneumoniae).